The chain runs to 395 residues: Yellow-related salivary protein M35 (395 aa).

The signal sequence occupies residues 1-18 (MKLILTVLAFLSLQVALS).

It belongs to the major royal jelly protein family. As to expression, salivary gland (at protein level).

It is found in the secreted. Its function is as follows. Probably modulates blood feeding of sand flies on vertebrate species by binding and sequestering different mediators involved in the host response. Functions as a chemoattractant for host neutrophils; likely acts through a G-protein-coupled receptor and effect is dependent on calcium influx and phosphatidylinositol 3-kinases (PI3K) activity. In terms of biological role, (Microbial infection) Probably enhances infection caused by Leishmania species in the host through augmentation of host neutrophil recruitment into the skin. This chain is Yellow-related salivary protein M35, found in Phlebotomus duboscqi (Sandfly).